A 444-amino-acid polypeptide reads, in one-letter code: Probable polygalacturonase At1g80170 (444 aa).

Residues 1-28 (MSYSRGGTLVTLLLLLVVASSLALTANA) form the signal peptide. PbH1 repeat units lie at residues 208–234 (CRRV…HISV), 235–256 (SRGI…SIVK), 258–278 (STQI…SIGS), 288–309 (VRDI…RIKT), 317–338 (VSKI…IIDQ), and 351–378 (TSAI…KISC). The active-site Proton donor is the Asp249. His272 is an active-site residue.

The protein belongs to the glycosyl hydrolase 28 family. As to expression, expressed in young, mature and dehiscing anthers. Found in stems, but not in roots or in abscission zone of floral organs.

The protein localises to the secreted. The protein resides in the cell wall. The catalysed reaction is (1,4-alpha-D-galacturonosyl)n+m + H2O = (1,4-alpha-D-galacturonosyl)n + (1,4-alpha-D-galacturonosyl)m.. In Arabidopsis thaliana (Mouse-ear cress), this protein is Probable polygalacturonase At1g80170.